The sequence spans 156 residues: Protein-export protein SecB (156 aa).

This sequence belongs to the SecB family. Homotetramer, a dimer of dimers. One homotetramer interacts with 1 SecA dimer.

The protein localises to the cytoplasm. One of the proteins required for the normal export of preproteins out of the cell cytoplasm. It is a molecular chaperone that binds to a subset of precursor proteins, maintaining them in a translocation-competent state. It also specifically binds to its receptor SecA. This Paraburkholderia phymatum (strain DSM 17167 / CIP 108236 / LMG 21445 / STM815) (Burkholderia phymatum) protein is Protein-export protein SecB.